The chain runs to 460 residues: MALNVVILAAGKGTRMRSDLPKVLHPIAHKSMVQHVIDTAHKVGSDAIQLVYGYGADKLQASLGEQQLNWVLQAEQLGTGHAVAQASPHIADSDTVLILYGDVPLIQQSTLEALLAARPENGVAILTVNLGNPMGYGRIVRTPCEGQEQGKVVGIIEQKDATAEQLLINEINTGIMAVPGKQLKAWLSRLSNNNAQGEYYLTDIIAMAHADGVAIDTAQPQSAIEVEGANNRVQLAQLERAYQAREAEKLMLAGANLRDPSRIDIRGDVTVGMDVMIDINVIFEGKVTLGNNVTIGAGAILIDCEIADNAEIKPYSIIEGAKLGVAASAGPFARLRPGAELKQDAHIGNFVEVKKAVIGVGSKAGHLAYLGDAIIGDGVNIGAGTITCNYDGANKHLTVIEDNVFVGSDTQLVAPVTIGKGATLGAGSTITRDVGENELVITRVKQKHLTGWQRPVKIKK.

Residues 1–232 (MALNVVILAA…AIEVEGANNR (232 aa)) are pyrophosphorylase. Residues 8-11 (LAAG), K22, Q73, 78-79 (GT), 100-102 (YGD), G137, E157, N172, and N230 each bind UDP-N-acetyl-alpha-D-glucosamine. Residue D102 coordinates Mg(2+). N230 is a binding site for Mg(2+). The tract at residues 233-253 (VQLAQLERAYQAREAEKLMLA) is linker. An N-acetyltransferase region spans residues 254-460 (GANLRDPSRI…GWQRPVKIKK (207 aa)). Positions 336 and 354 each coordinate UDP-N-acetyl-alpha-D-glucosamine. The active-site Proton acceptor is H366. The UDP-N-acetyl-alpha-D-glucosamine site is built by Y369 and N380. Acetyl-CoA-binding positions include A383, 389-390 (NY), S408, A426, and R443.

This sequence in the N-terminal section; belongs to the N-acetylglucosamine-1-phosphate uridyltransferase family. The protein in the C-terminal section; belongs to the transferase hexapeptide repeat family. In terms of assembly, homotrimer. Requires Mg(2+) as cofactor.

It localises to the cytoplasm. It catalyses the reaction alpha-D-glucosamine 1-phosphate + acetyl-CoA = N-acetyl-alpha-D-glucosamine 1-phosphate + CoA + H(+). The enzyme catalyses N-acetyl-alpha-D-glucosamine 1-phosphate + UTP + H(+) = UDP-N-acetyl-alpha-D-glucosamine + diphosphate. Its pathway is nucleotide-sugar biosynthesis; UDP-N-acetyl-alpha-D-glucosamine biosynthesis; N-acetyl-alpha-D-glucosamine 1-phosphate from alpha-D-glucosamine 6-phosphate (route II): step 2/2. The protein operates within nucleotide-sugar biosynthesis; UDP-N-acetyl-alpha-D-glucosamine biosynthesis; UDP-N-acetyl-alpha-D-glucosamine from N-acetyl-alpha-D-glucosamine 1-phosphate: step 1/1. It functions in the pathway bacterial outer membrane biogenesis; LPS lipid A biosynthesis. In terms of biological role, catalyzes the last two sequential reactions in the de novo biosynthetic pathway for UDP-N-acetylglucosamine (UDP-GlcNAc). The C-terminal domain catalyzes the transfer of acetyl group from acetyl coenzyme A to glucosamine-1-phosphate (GlcN-1-P) to produce N-acetylglucosamine-1-phosphate (GlcNAc-1-P), which is converted into UDP-GlcNAc by the transfer of uridine 5-monophosphate (from uridine 5-triphosphate), a reaction catalyzed by the N-terminal domain. The chain is Bifunctional protein GlmU from Shewanella baltica (strain OS155 / ATCC BAA-1091).